Here is a 206-residue protein sequence, read N- to C-terminus: Transcription elongation factor A protein-like 5 (206 aa).

Positions 1–26 (MEKLYKENEGKPENERNLESEGKPED) are enriched in basic and acidic residues. The tract at residues 1-206 (MEKLYKENEG…QKDLEDVPYV (206 aa)) is disordered. Residues 27–42 (EGSTEDEGKSDEEEKP) show a composition bias toward acidic residues. Residues 43 to 56 (DMEGKTECEGKRED) are compositionally biased toward basic and acidic residues. A compositionally biased stretch (acidic residues) spans 57–70 (EGEPGDEGQLEDEG). Composition is skewed to basic and acidic residues over residues 71-86 (NQEK…KPQS), 102-113 (AAEKRPAEDYVP), 121-160 (DRGT…EELR), and 196-206 (GQKDLEDVPYV).

Belongs to the TFS-II family. TFA subfamily.

The protein resides in the nucleus. Functionally, may be involved in transcriptional regulation. The chain is Transcription elongation factor A protein-like 5 (TCEAL5) from Homo sapiens (Human).